The following is a 793-amino-acid chain: uncharacterized protein (793 aa).

An N-terminal signal peptide occupies residues 1-21 (MLKKTLLAYTIGFAFSPPANA). A disulfide bridge links Cys-769 with Cys-792.

This sequence belongs to the fimbrial export usher family.

Its subcellular location is the cell outer membrane. Functionally, involved in the export and assembly of a fimbrial subunit across the outer membrane. This is an uncharacterized protein from Escherichia coli (strain K12).